A 352-amino-acid chain; its full sequence is tRNA-specific 2-thiouridylase MnmA (352 aa).

6–13 (AVSGGTDS) is an ATP binding site. Cys92 serves as the catalytic Nucleophile. Cys92 and Cys189 are disulfide-bonded. Gly116 is an ATP binding site. The interval 139-141 (KDQ) is interaction with tRNA. Cys189 serves as the catalytic Cysteine persulfide intermediate. Residues 294 to 295 (RY) are interaction with tRNA.

Belongs to the MnmA/TRMU family.

The protein resides in the cytoplasm. The enzyme catalyses S-sulfanyl-L-cysteinyl-[protein] + uridine(34) in tRNA + AH2 + ATP = 2-thiouridine(34) in tRNA + L-cysteinyl-[protein] + A + AMP + diphosphate + H(+). In terms of biological role, catalyzes the 2-thiolation of uridine at the wobble position (U34) of tRNA, leading to the formation of s(2)U34. This Lawsonia intracellularis (strain PHE/MN1-00) protein is tRNA-specific 2-thiouridylase MnmA.